A 300-amino-acid polypeptide reads, in one-letter code: tRNA-cytidine(32) 2-sulfurtransferase (300 aa).

Residues 41 to 46 carry the PP-loop motif motif; that stretch reads SGGKDS. Residues cysteine 116, cysteine 119, and cysteine 207 each coordinate [4Fe-4S] cluster.

Belongs to the TtcA family. In terms of assembly, homodimer. Requires Mg(2+) as cofactor. The cofactor is [4Fe-4S] cluster.

Its subcellular location is the cytoplasm. The enzyme catalyses cytidine(32) in tRNA + S-sulfanyl-L-cysteinyl-[cysteine desulfurase] + AH2 + ATP = 2-thiocytidine(32) in tRNA + L-cysteinyl-[cysteine desulfurase] + A + AMP + diphosphate + H(+). It participates in tRNA modification. In terms of biological role, catalyzes the ATP-dependent 2-thiolation of cytidine in position 32 of tRNA, to form 2-thiocytidine (s(2)C32). The sulfur atoms are provided by the cysteine/cysteine desulfurase (IscS) system. In Idiomarina loihiensis (strain ATCC BAA-735 / DSM 15497 / L2-TR), this protein is tRNA-cytidine(32) 2-sulfurtransferase.